Here is a 111-residue protein sequence, read N- to C-terminus: UPF0145 protein BTH_I2656 (111 aa).

It belongs to the UPF0145 family.

The polypeptide is UPF0145 protein BTH_I2656 (Burkholderia thailandensis (strain ATCC 700388 / DSM 13276 / CCUG 48851 / CIP 106301 / E264)).